Consider the following 102-residue polypeptide: Small ribosomal subunit protein uS10 (102 aa).

This sequence belongs to the universal ribosomal protein uS10 family. As to quaternary structure, part of the 30S ribosomal subunit.

Involved in the binding of tRNA to the ribosomes. The chain is Small ribosomal subunit protein uS10 from Caldanaerobacter subterraneus subsp. tengcongensis (strain DSM 15242 / JCM 11007 / NBRC 100824 / MB4) (Thermoanaerobacter tengcongensis).